A 658-amino-acid chain; its full sequence is UvrABC system protein B (658 aa).

Residues 26–413 (EGINSGKKKQ…SPEVIEQIIR (388 aa)) form the Helicase ATP-binding domain. 39 to 46 (GATGTGKT) contacts ATP. Residues 92 to 115 (YYDYYQPEAYVPQTDTFIEKDAQI) carry the Beta-hairpin motif. The Helicase C-terminal domain maps to 430–596 (QIDDLLGEIQ…TIQKGVRDVI (167 aa)). The UVR domain maps to 622 to 657 (EKTIAKMEAEMKEAAKALDFERAAELRDLLLELKAE).

Belongs to the UvrB family. In terms of assembly, forms a heterotetramer with UvrA during the search for lesions. Interacts with UvrC in an incision complex.

It is found in the cytoplasm. The UvrABC repair system catalyzes the recognition and processing of DNA lesions. A damage recognition complex composed of 2 UvrA and 2 UvrB subunits scans DNA for abnormalities. Upon binding of the UvrA(2)B(2) complex to a putative damaged site, the DNA wraps around one UvrB monomer. DNA wrap is dependent on ATP binding by UvrB and probably causes local melting of the DNA helix, facilitating insertion of UvrB beta-hairpin between the DNA strands. Then UvrB probes one DNA strand for the presence of a lesion. If a lesion is found the UvrA subunits dissociate and the UvrB-DNA preincision complex is formed. This complex is subsequently bound by UvrC and the second UvrB is released. If no lesion is found, the DNA wraps around the other UvrB subunit that will check the other stand for damage. This is UvrABC system protein B from Bacillus cereus (strain ATCC 14579 / DSM 31 / CCUG 7414 / JCM 2152 / NBRC 15305 / NCIMB 9373 / NCTC 2599 / NRRL B-3711).